A 443-amino-acid chain; its full sequence is uncharacterized protein (443 aa).

10 helical membrane passes run 7 to 29 (VSLY…MLNT), 68 to 87 (YISS…SIFT), 94 to 111 (VLSL…YAIF), 121 to 143 (VTLF…SMFA), 150 to 164 (IVII…SLTC), 179 to 201 (IIST…YIFF), 206 to 225 (LIIK…FAIS), 358 to 375 (IRFI…FIRN), 382 to 399 (LFVV…SFFG), and 409 to 431 (LFGM…IYKI).

The protein localises to the cell membrane. This is an uncharacterized protein from Escherichia coli (strain K12).